The following is a 156-amino-acid chain: 6,7-dimethyl-8-ribityllumazine synthase (156 aa).

Residues Phe-23, 57-59, and 81-83 contribute to the 5-amino-6-(D-ribitylamino)uracil site; these read AFE and AVI. 86–87 is a (2S)-2-hydroxy-3-oxobutyl phosphate binding site; the sequence is ST. The Proton donor role is filled by His-89. 5-amino-6-(D-ribitylamino)uracil is bound at residue Phe-114. Arg-128 is a (2S)-2-hydroxy-3-oxobutyl phosphate binding site.

It belongs to the DMRL synthase family.

It catalyses the reaction (2S)-2-hydroxy-3-oxobutyl phosphate + 5-amino-6-(D-ribitylamino)uracil = 6,7-dimethyl-8-(1-D-ribityl)lumazine + phosphate + 2 H2O + H(+). The protein operates within cofactor biosynthesis; riboflavin biosynthesis; riboflavin from 2-hydroxy-3-oxobutyl phosphate and 5-amino-6-(D-ribitylamino)uracil: step 1/2. Its function is as follows. Catalyzes the formation of 6,7-dimethyl-8-ribityllumazine by condensation of 5-amino-6-(D-ribitylamino)uracil with 3,4-dihydroxy-2-butanone 4-phosphate. This is the penultimate step in the biosynthesis of riboflavin. This chain is 6,7-dimethyl-8-ribityllumazine synthase, found in Campylobacter lari (strain RM2100 / D67 / ATCC BAA-1060).